We begin with the raw amino-acid sequence, 238 residues long: 6-phosphogluconolactonase (238 aa).

Belongs to the glucosamine/galactosamine-6-phosphate isomerase family. 6-phosphogluconolactonase subfamily.

It carries out the reaction 6-phospho-D-glucono-1,5-lactone + H2O = 6-phospho-D-gluconate + H(+). The protein operates within carbohydrate degradation; pentose phosphate pathway; D-ribulose 5-phosphate from D-glucose 6-phosphate (oxidative stage): step 2/3. In terms of biological role, hydrolysis of 6-phosphogluconolactone to 6-phosphogluconate. The protein is 6-phosphogluconolactonase (pgl) of Mesorhizobium japonicum (strain LMG 29417 / CECT 9101 / MAFF 303099) (Mesorhizobium loti (strain MAFF 303099)).